Reading from the N-terminus, the 86-residue chain is Small ribosomal subunit protein bS18 (86 aa).

Belongs to the bacterial ribosomal protein bS18 family. Part of the 30S ribosomal subunit. Forms a tight heterodimer with protein bS6.

Functionally, binds as a heterodimer with protein bS6 to the central domain of the 16S rRNA, where it helps stabilize the platform of the 30S subunit. This chain is Small ribosomal subunit protein bS18, found in Protochlamydia amoebophila (strain UWE25).